Here is a 363-residue protein sequence, read N- to C-terminus: 3-isopropylmalate dehydrogenase (363 aa).

Position 78 to 91 (78 to 91) interacts with NAD(+); that stretch reads GKKWDTLPINERPE. Substrate contacts are provided by Arg99, Arg109, Arg138, and Asp227. Asp227, Asp251, and Asp255 together coordinate Mg(2+). 285-297 contacts NAD(+); that stretch reads GSAPDIQGKNIAN.

This sequence belongs to the isocitrate and isopropylmalate dehydrogenases family. LeuB type 1 subfamily. In terms of assembly, homodimer. The cofactor is Mg(2+). Mn(2+) is required as a cofactor.

The protein localises to the cytoplasm. It carries out the reaction (2R,3S)-3-isopropylmalate + NAD(+) = 4-methyl-2-oxopentanoate + CO2 + NADH. It functions in the pathway amino-acid biosynthesis; L-leucine biosynthesis; L-leucine from 3-methyl-2-oxobutanoate: step 3/4. Its function is as follows. Catalyzes the oxidation of 3-carboxy-2-hydroxy-4-methylpentanoate (3-isopropylmalate) to 3-carboxy-4-methyl-2-oxopentanoate. The product decarboxylates to 4-methyl-2 oxopentanoate. This Buchnera aphidicola subsp. Diuraphis noxia protein is 3-isopropylmalate dehydrogenase.